The primary structure comprises 291 residues: Lipoyl synthase, mitochondrial (291 aa).

Positions 45, 50, 56, 71, 75, 78, and 283 each coordinate [4Fe-4S] cluster. One can recognise a Radical SAM core domain in the interval 57 to 272; that stretch reads WGEGTATFMI…EKIGKELGFR (216 aa).

This sequence belongs to the radical SAM superfamily. Lipoyl synthase family. Requires [4Fe-4S] cluster as cofactor.

The protein resides in the mitochondrion. The catalysed reaction is [[Fe-S] cluster scaffold protein carrying a second [4Fe-4S](2+) cluster] + N(6)-octanoyl-L-lysyl-[protein] + 2 oxidized [2Fe-2S]-[ferredoxin] + 2 S-adenosyl-L-methionine + 4 H(+) = [[Fe-S] cluster scaffold protein] + N(6)-[(R)-dihydrolipoyl]-L-lysyl-[protein] + 4 Fe(3+) + 2 hydrogen sulfide + 2 5'-deoxyadenosine + 2 L-methionine + 2 reduced [2Fe-2S]-[ferredoxin]. It participates in protein modification; protein lipoylation via endogenous pathway; protein N(6)-(lipoyl)lysine from octanoyl-[acyl-carrier-protein]: step 2/2. In terms of biological role, catalyzes the radical-mediated insertion of two sulfur atoms into the C-6 and C-8 positions of the octanoyl moiety bound to the lipoyl domains of lipoate-dependent enzymes, thereby converting the octanoylated domains into lipoylated derivatives. The chain is Lipoyl synthase, mitochondrial from Nematostella vectensis (Starlet sea anemone).